The following is a 156-amino-acid chain: Small ribosomal subunit protein uS7 (156 aa).

This sequence belongs to the universal ribosomal protein uS7 family. Part of the 30S ribosomal subunit. Contacts proteins S9 and S11.

Its function is as follows. One of the primary rRNA binding proteins, it binds directly to 16S rRNA where it nucleates assembly of the head domain of the 30S subunit. Is located at the subunit interface close to the decoding center, probably blocks exit of the E-site tRNA. This chain is Small ribosomal subunit protein uS7, found in Actinobacillus pleuropneumoniae serotype 5b (strain L20).